A 185-amino-acid chain; its full sequence is Crossover junction endodeoxyribonuclease RuvC (185 aa).

Residues Asp7, Glu68, and Asp141 contribute to the active site. 3 residues coordinate Mg(2+): Asp7, Glu68, and Asp141.

This sequence belongs to the RuvC family. Homodimer which binds Holliday junction (HJ) DNA. The HJ becomes 2-fold symmetrical on binding to RuvC with unstacked arms; it has a different conformation from HJ DNA in complex with RuvA. In the full resolvosome a probable DNA-RuvA(4)-RuvB(12)-RuvC(2) complex forms which resolves the HJ. It depends on Mg(2+) as a cofactor.

Its subcellular location is the cytoplasm. It carries out the reaction Endonucleolytic cleavage at a junction such as a reciprocal single-stranded crossover between two homologous DNA duplexes (Holliday junction).. Functionally, the RuvA-RuvB-RuvC complex processes Holliday junction (HJ) DNA during genetic recombination and DNA repair. Endonuclease that resolves HJ intermediates. Cleaves cruciform DNA by making single-stranded nicks across the HJ at symmetrical positions within the homologous arms, yielding a 5'-phosphate and a 3'-hydroxyl group; requires a central core of homology in the junction. The consensus cleavage sequence is 5'-(A/T)TT(C/G)-3'. Cleavage occurs on the 3'-side of the TT dinucleotide at the point of strand exchange. HJ branch migration catalyzed by RuvA-RuvB allows RuvC to scan DNA until it finds its consensus sequence, where it cleaves and resolves the cruciform DNA. The chain is Crossover junction endodeoxyribonuclease RuvC from Mycolicibacterium smegmatis (strain ATCC 700084 / mc(2)155) (Mycobacterium smegmatis).